Reading from the N-terminus, the 338-residue chain is Nicotinate-nucleotide--dimethylbenzimidazole phosphoribosyltransferase (338 aa).

Glutamate 305 serves as the catalytic Proton acceptor.

The protein belongs to the CobT family.

The catalysed reaction is 5,6-dimethylbenzimidazole + nicotinate beta-D-ribonucleotide = alpha-ribazole 5'-phosphate + nicotinate + H(+). Its pathway is nucleoside biosynthesis; alpha-ribazole biosynthesis; alpha-ribazole from 5,6-dimethylbenzimidazole: step 1/2. Its function is as follows. Catalyzes the synthesis of alpha-ribazole-5'-phosphate from nicotinate mononucleotide (NAMN) and 5,6-dimethylbenzimidazole (DMB). This is Nicotinate-nucleotide--dimethylbenzimidazole phosphoribosyltransferase from Novosphingobium aromaticivorans (strain ATCC 700278 / DSM 12444 / CCUG 56034 / CIP 105152 / NBRC 16084 / F199).